The chain runs to 361 residues: 5-formaminoimidazole-4-carboxamide-1-(beta)-D-ribofuranosyl 5'-monophosphate synthetase (361 aa).

2 residues coordinate 5-amino-1-(5-phospho-beta-D-ribosyl)imidazole-4-carboxamide: histidine 27 and serine 94. The ATP-grasp domain maps to 116–348; the sequence is RAILRWEAER…MGQRIAKEIK (233 aa). Residues 146-208 and glutamate 230 contribute to the ATP site; that span reads PDEI…ANYC. Residue asparagine 258 participates in 5-amino-1-(5-phospho-beta-D-ribosyl)imidazole-4-carboxamide binding. Positions 297 and 310 each coordinate Mg(2+).

Belongs to the phosphohexose mutase family. The cofactor is Mg(2+). Mn(2+) serves as cofactor.

It catalyses the reaction 5-amino-1-(5-phospho-beta-D-ribosyl)imidazole-4-carboxamide + formate + ATP = 5-formamido-1-(5-phospho-D-ribosyl)imidazole-4-carboxamide + ADP + phosphate. It participates in purine metabolism; IMP biosynthesis via de novo pathway; 5-formamido-1-(5-phospho-D-ribosyl)imidazole-4-carboxamide from 5-amino-1-(5-phospho-D-ribosyl)imidazole-4-carboxamide (formate route): step 1/1. Catalyzes the ATP- and formate-dependent formylation of 5-aminoimidazole-4-carboxamide-1-beta-d-ribofuranosyl 5'-monophosphate (AICAR) to 5-formaminoimidazole-4-carboxamide-1-beta-d-ribofuranosyl 5'-monophosphate (FAICAR) in the absence of folates. In Methanococcus vannielii (strain ATCC 35089 / DSM 1224 / JCM 13029 / OCM 148 / SB), this protein is 5-formaminoimidazole-4-carboxamide-1-(beta)-D-ribofuranosyl 5'-monophosphate synthetase.